The following is a 130-amino-acid chain: Small ribosomal subunit protein uS9 (130 aa).

The segment at 98–130 (LKRAGMLTRDPRMKERKKPGLKGARRSPQFSKR) is disordered. Residues 111-130 (KERKKPGLKGARRSPQFSKR) show a composition bias toward basic residues.

This sequence belongs to the universal ribosomal protein uS9 family.

The protein is Small ribosomal subunit protein uS9 of Macrococcus caseolyticus (strain JCSC5402) (Macrococcoides caseolyticum).